The sequence spans 109 residues: Large ribosomal subunit protein bL19 (109 aa).

It belongs to the bacterial ribosomal protein bL19 family.

Its function is as follows. This protein is located at the 30S-50S ribosomal subunit interface and may play a role in the structure and function of the aminoacyl-tRNA binding site. The chain is Large ribosomal subunit protein bL19 from Rubrobacter xylanophilus (strain DSM 9941 / JCM 11954 / NBRC 16129 / PRD-1).